The sequence spans 317 residues: Ribosomal RNA small subunit methyltransferase H (317 aa).

Residues Gly34–His36, Asp53, Phe80, Asp98, and Gln105 each bind S-adenosyl-L-methionine.

Belongs to the methyltransferase superfamily. RsmH family.

It is found in the cytoplasm. The catalysed reaction is cytidine(1402) in 16S rRNA + S-adenosyl-L-methionine = N(4)-methylcytidine(1402) in 16S rRNA + S-adenosyl-L-homocysteine + H(+). Its function is as follows. Specifically methylates the N4 position of cytidine in position 1402 (C1402) of 16S rRNA. In Tropheryma whipplei (strain TW08/27) (Whipple's bacillus), this protein is Ribosomal RNA small subunit methyltransferase H.